The chain runs to 456 residues: Glycine--tRNA ligase (456 aa).

The substrate site is built by arginine 98 and glutamate 168. ATP contacts are provided by residues 200–202, 210–215, 285–286, and 329–332; these read RNE, FRTREF, EL, and GVER. Substrate is bound at residue 215 to 219; the sequence is FEQME. 325–329 provides a ligand contact to substrate; the sequence is EPSVG.

Belongs to the class-II aminoacyl-tRNA synthetase family. As to quaternary structure, homodimer.

It localises to the cytoplasm. It catalyses the reaction tRNA(Gly) + glycine + ATP = glycyl-tRNA(Gly) + AMP + diphosphate. Catalyzes the attachment of glycine to tRNA(Gly). The sequence is that of Glycine--tRNA ligase from Mycoplasma mycoides subsp. mycoides SC (strain CCUG 32753 / NCTC 10114 / PG1).